The sequence spans 736 residues: Subtilisin-like protease SBT4.11 (736 aa).

Positions 1–25 (MAKRGAFSSFHSFLIVLLFLNSVLA) are cleaved as a signal peptide. A propeptide spans 26–113 (VTHGHQDKQV…VFPNKKLKLQ (88 aa)) (activation peptide). In terms of domain architecture, Inhibitor I9 spans 35 to 112 (VYIVYMGSLP…SVFPNKKLKL (78 aa)). The Peptidase S8 domain maps to 117 to 579 (SWDFMGLKEG…AGHVDPIAAT (463 aa)). Asp-145 serves as the catalytic Charge relay system. An N-linked (GlcNAc...) asparagine glycan is attached at Asn-176. His-200 (charge relay system) is an active-site residue. 2 N-linked (GlcNAc...) asparagine glycosylation sites follow: Asn-215 and Asn-223. The region spanning 355 to 437 (KFPLVYGKSA…GLQKDDFESV (83 aa)) is the PA domain. The active-site Charge relay system is the Ser-518. Residues Asn-555, Asn-602, Asn-638, Asn-646, and Asn-656 are each glycosylated (N-linked (GlcNAc...) asparagine).

Belongs to the peptidase S8 family. Post-translationally, the C-terminal propeptide is autocleaved.

It is found in the secreted. The polypeptide is Subtilisin-like protease SBT4.11 (Arabidopsis thaliana (Mouse-ear cress)).